Reading from the N-terminus, the 244-residue chain is MTEAESKTVVPESVLKKRKREEEWALAKKQELEAAKKQNAEKRKLIFNRAKQYSKEYQEKERELIQLKREAKLKGGFYVDPEAKLLFIIRIRGINAIDPKTKKILQLLRLRQIFNGVFLKVNKATINMLRRVEPYVTYGYPNLKSVKELIYKRGFGKLNHQRTALTDNSIVDQGLGKHGIICVEDLIHEIMTVGPHFKEANNFLWPFQLKAPLGGMKKKRNHYVEGGDAGNRENFINELVRRMN.

Belongs to the universal ribosomal protein uL30 family.

This is Large ribosomal subunit protein uL30w (RPL7D) from Arabidopsis thaliana (Mouse-ear cress).